Here is a 418-residue protein sequence, read N- to C-terminus: Nucleoside permease NupC (418 aa).

A run of 9 helical transmembrane segments spans residues 2–22 (IFSSLFSVVGMAVLFLIAWVF), 34–54 (IVSAFVIQVALGALALYVPLG), 93–113 (IGGFVFAINVLAIIIFFASLI), 174–194 (IFAVMCVGMASVAGPVLAGYA), 198–218 (IPLPYLIAASFMSAPGGLLFA), 264–284 (LLAFVGMLALINGLLGVVGGF), 292–314 (LGLILGTLLKPLAFMLGIPWSQA), 354–374 (AIITFALCGFANLSSVAMLIG), and 395–415 (VLVGTLSNFMSATIAGLFIGL).

This sequence belongs to the concentrative nucleoside transporter (CNT) (TC 2.A.41) family.

It localises to the cell inner membrane. Involved in purine nucleosides uptake. Could also be involved in uptake of nucleobases. This chain is Nucleoside permease NupC, found in Helicobacter pylori (strain ATCC 700392 / 26695) (Campylobacter pylori).